The chain runs to 1755 residues: Periplakin (1755 aa).

Basic residues predominate over residues 1-11; that stretch reads MHSLFRKRNKG. The interval 1-20 is disordered; the sequence is MHSLFRKRNKGKYSPTVQTR. Ser14 is subject to Phosphoserine. Coiled coils occupy residues 16-125 and 182-387; these read TVQT…KQMY and LAKD…QQVV. 3 Spectrin repeats span residues 214–315, 321–483, and 503–610; these read QDYM…SHLK, HQFH…HALQ, and RQLL…EKVD. In terms of domain architecture, SH3 spans 397–453; the sequence is LKPIPVEALCDFESDQGLISRGYSYTLQKNNGESWELTDSTGKKLAAPAVCFIIPPT. Position 463 is a phosphoserine (Ser463). Coiled-coil stretches lie at residues 611–819 and 883–1644; these read VANR…RNSH and LSSG…SVAV. 4 positions are modified to phosphoserine: Ser885, Ser947, Ser1583, and Ser1656. Residues 1556–1755 form an interacts with BFSP2 and VIM region; that stretch reads ELDFLREENH…ELAVLVSGQK (200 aa). 2 Plectin repeats span residues 1650–1684 and 1699–1734; these read ENHL…WKMF and VKGP…AAQY.

This sequence belongs to the plakin or cytolinker family. In terms of assembly, homodimer or a heterodimer with EVPL. Found in a complex composed of PPL (via C-terminal linker domain), BFSP1 and BFSP2 in the retinal lens. Within the complex interacts (via C-terminal linker domain) with BFSP2. Interacts with VIM. Binds to the PH domain of AKT1. Interacts with FCGR1A. May interact with PPHLN1. As to expression, expressed in the retinal lens (at protein level).

It localises to the cell junction. Its subcellular location is the desmosome. The protein localises to the cytoplasm. The protein resides in the cytoskeleton. It is found in the cell membrane. Component of the cornified envelope of keratinocytes. May link the cornified envelope to desmosomes and intermediate filaments. May act as a localization signal in PKB/AKT-mediated signaling. This is Periplakin (Ppl) from Mus musculus (Mouse).